A 441-amino-acid chain; its full sequence is Putative cytochrome P450 138 (441 aa).

Cysteine 388 lines the heme pocket.

It belongs to the cytochrome P450 family. It depends on heme as a cofactor.

This is Putative cytochrome P450 138 (cyp138) from Mycobacterium bovis (strain ATCC BAA-935 / AF2122/97).